Here is a 162-residue protein sequence, read N- to C-terminus: Transmembrane protein 92 (162 aa).

The N-terminal stretch at 1-22 is a signal peptide; the sequence is MLDTWVWGTLTLTFGLLSSLQG. The Extracellular segment spans residues 23–63; it reads VSFNETANTCDILNCPKGFTCCVKECCPERKVWDPANDRFR. A helical transmembrane segment spans residues 64–84; the sequence is FLVILACIIFPILFICALVSL. Residues 85 to 162 lie on the Cytoplasmic side of the membrane; it reads FCPNCTELQH…QMRGRAYATL (78 aa). The tract at residues 134–162 is disordered; the sequence is TPPTEPPPPYSLRPEGPAGQMRGRAYATL.

It localises to the membrane. The sequence is that of Transmembrane protein 92 (Tmem92) from Mus musculus (Mouse).